A 170-amino-acid chain; its full sequence is Protein-lysine myristoyltransferase HlyC (170 aa).

Residue histidine 23 is part of the active site. A heme-binding site is contributed by histidine 151.

This sequence belongs to the RTX toxin acyltransferase family. As to quaternary structure, monomer. Proteolytically cleaved by the protease systems ClpAP, ClpXP and FtsH, leading to its degradation.

Its subcellular location is the cytoplasm. The enzyme catalyses tetradecanoyl-[ACP] + L-lysyl-[protein] = N(6)-tetradecanoyl-L-lysyl-[protein] + holo-[ACP] + H(+). Its activity is regulated as follows. The acyltransferase activity is inhibited by heme. Protein-lysine myristoyltransferase that catalyzes myristoylation of the protoxin (HlyA) at two internal lysine residues, thereby converting it to the active toxin. The sequence is that of Protein-lysine myristoyltransferase HlyC from Escherichia coli.